We begin with the raw amino-acid sequence, 363 residues long: Flagellar P-ring protein (363 aa).

A signal peptide spans 1–20; the sequence is MKIKLILACALMVFSAASSA.

Belongs to the FlgI family. The basal body constitutes a major portion of the flagellar organelle and consists of four rings (L,P,S, and M) mounted on a central rod.

It is found in the periplasm. The protein resides in the bacterial flagellum basal body. Functionally, assembles around the rod to form the L-ring and probably protects the motor/basal body from shearing forces during rotation. The sequence is that of Flagellar P-ring protein from Shewanella loihica (strain ATCC BAA-1088 / PV-4).